We begin with the raw amino-acid sequence, 161 residues long: Cyclic pyranopterin monophosphate synthase (161 aa).

Substrate is bound by residues 75 to 77 and 115 to 116; these read MCH and ME. The active site involves D130.

The protein belongs to the MoaC family. Homohexamer; trimer of dimers.

It carries out the reaction (8S)-3',8-cyclo-7,8-dihydroguanosine 5'-triphosphate = cyclic pyranopterin phosphate + diphosphate. The protein operates within cofactor biosynthesis; molybdopterin biosynthesis. Its function is as follows. Catalyzes the conversion of (8S)-3',8-cyclo-7,8-dihydroguanosine 5'-triphosphate to cyclic pyranopterin monophosphate (cPMP). The sequence is that of Cyclic pyranopterin monophosphate synthase from Bacillus thuringiensis subsp. konkukian (strain 97-27).